Consider the following 20-residue polypeptide: Succinate--CoA ligase [ADP-forming] subunit beta, mitochondrial (20 aa).

Residues 8–20 form the ATP-grasp domain; that stretch reads SMELLQEAGVSIP.

The protein belongs to the succinate/malate CoA ligase beta subunit family. ATP-specific subunit beta subfamily. In terms of assembly, heterodimer of an alpha and a beta subunit. The beta subunit determines specificity for ATP. Interacts with ALAS2.

It localises to the mitochondrion. The enzyme catalyses succinate + ATP + CoA = succinyl-CoA + ADP + phosphate. It participates in carbohydrate metabolism; tricarboxylic acid cycle; succinate from succinyl-CoA (ligase route): step 1/1. Functionally, ATP-specific succinyl-CoA synthetase functions in the citric acid cycle (TCA), coupling the hydrolysis of succinyl-CoA to the synthesis of ATP and thus represents the only step of substrate-level phosphorylation in the TCA. The beta subunit provides nucleotide specificity of the enzyme and binds the substrate succinate, while the binding sites for coenzyme A and phosphate are found in the alpha subunit. The polypeptide is Succinate--CoA ligase [ADP-forming] subunit beta, mitochondrial (Canis lupus familiaris (Dog)).